The chain runs to 224 residues: UPF0111 protein CT_691 (224 aa).

Belongs to the UPF0111 family.

The polypeptide is UPF0111 protein CT_691 (Chlamydia trachomatis serovar D (strain ATCC VR-885 / DSM 19411 / UW-3/Cx)).